The chain runs to 499 residues: Pyruvate kinase 2 (499 aa).

Arg50 is a binding site for substrate. 4 residues coordinate K(+): Asn52, Ser54, Asp84, and Thr85. ATP is bound at residue 52 to 55 (NFSH). Arg91 lines the ATP pocket. Glu241 contacts Mg(2+). Residues Gly264, Asp265, and Thr297 each contribute to the substrate site. Asp265 lines the Mg(2+) pocket.

It belongs to the pyruvate kinase family. Homotetramer. The cofactor is Mg(2+). Requires K(+) as cofactor.

It catalyses the reaction pyruvate + ATP = phosphoenolpyruvate + ADP + H(+). Its pathway is carbohydrate degradation; glycolysis; pyruvate from D-glyceraldehyde 3-phosphate: step 5/5. Its activity is regulated as follows. Activated by fructose 2,6-bisphosphate, activated by the effector in a cooperative manner. The polypeptide is Pyruvate kinase 2 (PYK2) (Trypanosoma brucei brucei).